A 234-amino-acid polypeptide reads, in one-letter code: Uridylate kinase (234 aa).

9 to 12 serves as a coordination point for ATP; sequence KLSG. UMP is bound at residue Gly-51. Positions 52 and 56 each coordinate ATP. Residues Asp-71 and 132–139 contribute to the UMP site; that span reads CGNPFFTT. The ATP site is built by Thr-159, Tyr-165, and Asp-168.

This sequence belongs to the UMP kinase family. Homohexamer.

It is found in the cytoplasm. It catalyses the reaction UMP + ATP = UDP + ADP. It functions in the pathway pyrimidine metabolism; CTP biosynthesis via de novo pathway; UDP from UMP (UMPK route): step 1/1. Its activity is regulated as follows. Inhibited by UTP. Functionally, catalyzes the reversible phosphorylation of UMP to UDP. The chain is Uridylate kinase from Prochlorococcus marinus (strain AS9601).